Here is a 364-residue protein sequence, read N- to C-terminus: Protein spindle-F (364 aa).

The segment at 1 to 26 (MEASAAKITPMASSMSASGSTNSPSS) is disordered. The segment covering 9–26 (TPMASSMSASGSTNSPSS) has biased composition (low complexity). A coiled-coil region spans residues 32–114 (ALQVALQTIK…GMVSNENRRL (83 aa)). Residue Ser-53 is modified to Phosphoserine. Positions 56 to 75 (EENQQLREASSRSEGAPRAN) are disordered. Phosphoserine occurs at positions 85, 172, and 202. Residues 210-243 (AKRCLDGLQELRREAMKQQQELRSVMTLLENRIA) are a coiled coil. Residues Ser-264 and Ser-270 each carry the phosphoserine modification. A UBZ1-type zinc finger spans residues 310–336 (EKTCPMCGKQYSSQVSFNAFREHVEMH). Positions 313 and 316 each coordinate Zn(2+). Ser-325 carries the post-translational modification Phosphoserine. Residues His-332 and His-336 each contribute to the Zn(2+) site. Ser-349 is subject to Phosphoserine.

As to quaternary structure, forms homooligomers. Interacts with the dynein light chain ctp. Interacts (via C-terminus) with IKKepsilon; this leads to phosphorylation of spn-F. Forms ternary complexes with ctp and IKKepsilon; this is required for spn-F redistribution from puncta in larval neurons and for dendrite pruning. Interacts with ctp and IKKepsilon through distinct regions. Interacts (via C-terminus) with jvl. In terms of processing, phosphorylated by IKKepsilon. Phosphorylation is required for spn-F neuronal distribution and dendrite pruning and reduces spn-F homooligomerization. It does not lead to spn-F degradation. In pupal bristles, localizes to the bristle tip throughout the elongation period (at protein level).

The protein localises to the cytoplasm. It is found in the cytoskeleton. Its subcellular location is the cell projection. The protein resides in the axon. It localises to the dendrite. The protein localises to the perikaryon. Plays a role in oocyte axis determination and microtubule organization during oogenesis. Also required for polarized organization of the bristle. Required, with jvl, for activation of the kinase IKKepsilon in the germ line. Also required for localization of IKKepsilon to the distal tip of elongating bristles by acting as an adapter linking IKKepsilon and cytoplasmic dynein. Involved in dendrite pruning in larval sensory neurons during metamorphosis. The protein is Protein spindle-F of Drosophila melanogaster (Fruit fly).